We begin with the raw amino-acid sequence, 434 residues long: Autophagy-related protein 18 (434 aa).

WD repeat units lie at residues 1–34 (MNYVTFNQDYSCLAVGTAKGFRIYHTEPFSKIFT), 183–223 (AHRA…KLYQ), and 228–267 (TYPSSIFSLSFNMSSTLLCVSSNSDTIHIFRLGGPVTGLP). Positions 224 to 228 (FRRGT) match the L/FRRG motif motif. Positions 262–318 (PVTGLPESPQSPGDKDKWRRSRSFDSENGSPPAGISPGSEMADVPAEKSKSSGTFGS) are disordered. Basic and acidic residues predominate over residues 274-286 (GDKDKWRRSRSFD). A WD 4 repeat occupies 367 to 407 (PRSGPVKSVVAMSSSSPQVMVVTSDGGFYIYSIDMETGGEG).

This sequence belongs to the WD repeat PROPPIN family. As to quaternary structure, component of the PI(3,5)P2 regulatory complex.

It is found in the preautophagosomal structure membrane. The protein resides in the vacuole membrane. Its subcellular location is the endosome membrane. In terms of biological role, the PI(3,5)P2 regulatory complex regulates both the synthesis and turnover of phosphatidylinositol 3,5-bisphosphate (PtdIns(3,5)P2). Necessary for proper vacuole morphology. Plays an important role in osmotically-induced vacuole fragmentation. Required for cytoplasm to vacuole transport (Cvt) vesicle formation, pexophagy and starvation-induced autophagy. Involved in correct atg9 trafficking to the pre-autophagosomal structure. Might also be involved in premeiotic DNA replication. This Botryotinia fuckeliana (strain B05.10) (Noble rot fungus) protein is Autophagy-related protein 18 (atg18).